Here is a 459-residue protein sequence, read N- to C-terminus: Arginine biosynthesis bifunctional protein ArgJ, mitochondrial (459 aa).

Residues T187, K216, T227, E314, N454, and T459 each contribute to the substrate site. The active-site Nucleophile is T227.

The protein belongs to the ArgJ family. In terms of assembly, heterodimer of an alpha and a beta chain. Post-translationally, the alpha and beta chains are autoproteolytically processed from a single precursor protein within the mitochondrion.

It localises to the mitochondrion matrix. It carries out the reaction N(2)-acetyl-L-ornithine + L-glutamate = N-acetyl-L-glutamate + L-ornithine. It catalyses the reaction L-glutamate + acetyl-CoA = N-acetyl-L-glutamate + CoA + H(+). Its pathway is amino-acid biosynthesis; L-arginine biosynthesis; L-ornithine and N-acetyl-L-glutamate from L-glutamate and N(2)-acetyl-L-ornithine (cyclic): step 1/1. The protein operates within amino-acid biosynthesis; L-arginine biosynthesis; N(2)-acetyl-L-ornithine from L-glutamate: step 1/4. Catalyzes two activities which are involved in the cyclic version of arginine biosynthesis: the synthesis of acetylglutamate from glutamate and acetyl-CoA, and of ornithine by transacetylation between acetylornithine and glutamate. This chain is Arginine biosynthesis bifunctional protein ArgJ, mitochondrial, found in Uncinocarpus reesii (strain UAMH 1704).